The chain runs to 340 residues: Flavonoid 7-O-methyltransferase 1 (340 aa).

S-adenosyl-L-methionine is bound at residue Asp207. His245 functions as the Proton acceptor in the catalytic mechanism.

It belongs to the class I-like SAM-binding methyltransferase superfamily. Cation-independent O-methyltransferase family. Homodimer. As to expression, expressed in leaves.

It catalyses the reaction (2S)-naringenin + S-adenosyl-L-methionine = (2S)-sakuranetin + S-adenosyl-L-homocysteine + H(+). The enzyme catalyses scutellarein + S-adenosyl-L-methionine = scutellarein 7-methyl ether + S-adenosyl-L-homocysteine. The catalysed reaction is apigenin + S-adenosyl-L-methionine = genkwanin + S-adenosyl-L-homocysteine + H(+). It carries out the reaction luteolin + S-adenosyl-L-methionine = luteolin 7-methyl ether + S-adenosyl-L-homocysteine + H(+). It catalyses the reaction chrysoeriol + S-adenosyl-L-methionine = velutin + S-adenosyl-L-homocysteine. The enzyme catalyses diosmetin + S-adenosyl-L-methionine = luteolin 4',7-dimethyl ether + S-adenosyl-L-homocysteine. The catalysed reaction is acacetin + S-adenosyl-L-methionine = apigenin 4',7-dimethyl ether + S-adenosyl-L-homocysteine. It carries out the reaction scutellarein 4'-methyl ether + S-adenosyl-L-methionine = ladanein + S-adenosyl-L-homocysteine. The protein operates within flavonoid metabolism. In terms of biological role, flavonoid 7-O-methyltransferase involved in the biosynthesis of polymethoxylated flavonoids natural products such as nevadensin and salvigenin, aroma compounds which contribute to the flavor of sweet basil, and exhibit pharmacological activities such as anti-allergic, anti-oxidant, antibacterial, anti-proliferative, and anti-inflammatory effects. Catalyzes S-adenosylmethionine-dependent regioselective 7-O-methylation of flavonoids; active on various hydroxylated flavonoid substrates, including apigenin (API) and luteolin (LUT), and, with a lower efficiency, scutellarein (SCU), naringenin (NAR), chrysoeriol (CHRYS), diosmetin (DIOS), acacetin (ACA) and scutellarein-7-methyl ether (SCU7Me). The chain is Flavonoid 7-O-methyltransferase 1 from Ocimum basilicum (Sweet basil).